The sequence spans 282 residues: Pantothenate synthetase (282 aa).

ATP is bound at residue 30–37 (MGYFHEGH). The Proton donor role is filled by H37. (R)-pantoate is bound at residue Q61. Q61 lines the beta-alanine pocket. 147-150 (GQKD) lines the ATP pocket. Q153 contributes to the (R)-pantoate binding site. ATP is bound by residues V176 and 184–187 (LSSR).

Belongs to the pantothenate synthetase family. As to quaternary structure, homodimer.

The protein resides in the cytoplasm. The enzyme catalyses (R)-pantoate + beta-alanine + ATP = (R)-pantothenate + AMP + diphosphate + H(+). The protein operates within cofactor biosynthesis; (R)-pantothenate biosynthesis; (R)-pantothenate from (R)-pantoate and beta-alanine: step 1/1. Functionally, catalyzes the condensation of pantoate with beta-alanine in an ATP-dependent reaction via a pantoyl-adenylate intermediate. In Maridesulfovibrio salexigens (strain ATCC 14822 / DSM 2638 / NCIMB 8403 / VKM B-1763) (Desulfovibrio salexigens), this protein is Pantothenate synthetase.